A 199-amino-acid polypeptide reads, in one-letter code: Protein GrpE (199 aa).

Over residues 1-24 (MSKQNKKDWKKFKDEHKEEHKVEN) the composition is skewed to basic and acidic residues. The interval 1–47 (MSKQNKKDWKKFKDEHKEEHKVENEILEEEIDEKSQHQEPALGHPSY) is disordered.

Belongs to the GrpE family. In terms of assembly, homodimer.

It is found in the cytoplasm. Functionally, participates actively in the response to hyperosmotic and heat shock by preventing the aggregation of stress-denatured proteins, in association with DnaK and GrpE. It is the nucleotide exchange factor for DnaK and may function as a thermosensor. Unfolded proteins bind initially to DnaJ; upon interaction with the DnaJ-bound protein, DnaK hydrolyzes its bound ATP, resulting in the formation of a stable complex. GrpE releases ADP from DnaK; ATP binding to DnaK triggers the release of the substrate protein, thus completing the reaction cycle. Several rounds of ATP-dependent interactions between DnaJ, DnaK and GrpE are required for fully efficient folding. This Legionella pneumophila (strain Paris) protein is Protein GrpE.